We begin with the raw amino-acid sequence, 208 residues long: Inactive ribonuclease-like protein 10 (208 aa).

The N-terminal stretch at 1-24 is a signal peptide; sequence MKVTLVHLLFMMLLLLLGLGLGLG. N-linked (GlcNAc...) asparagine glycans are attached at residues asparagine 125 and asparagine 147.

It belongs to the pancreatic ribonuclease family. Post-translationally, the N-terminus is blocked. Glycosylated. In terms of tissue distribution, male-specific expression in proximal caput of the epididymis (at protein level).

Its subcellular location is the secreted. In terms of biological role, secreted proximal epididymal protein required for post-testicular sperm maturation and male fertility. May be involved in sperm adhesion to the egg zona pellucida. Does not have ribonuclease activity. This chain is Inactive ribonuclease-like protein 10 (Rnase10), found in Mus musculus (Mouse).